A 234-amino-acid chain; its full sequence is NLP effector protein 10 (234 aa).

The N-terminal stretch at 1-17 (MFKTFIIAAVAVATVRA) is a signal peptide. N-linked (GlcNAc...) asparagine glycosylation is present at asparagine 65. The Conserved undecapeptide motif I signature appears at 101–111 (AIMYSWYFPKD). The Hepta-peptide GHRHDWE motif II signature appears at 118–124 (GHRHDWE).

Belongs to the Necrosis inducing protein (NPP1) family.

It is found in the secreted. In terms of biological role, secreted effector that contributes moderately to virulence during infection by P.capsici. Does not cause visible reaction of C.annuum for several days after inoculation, but by 7 days after inoculation, small necrotic lesions become visible. Leads only to chlorotic areas, without necrosis at 7 days after non-host N.benthamiana leaves infection. In Phytophthora capsici, this protein is NLP effector protein 10.